The primary structure comprises 72 residues: UPF0270 protein plu0398 (72 aa).

Belongs to the UPF0270 family.

This chain is UPF0270 protein plu0398, found in Photorhabdus laumondii subsp. laumondii (strain DSM 15139 / CIP 105565 / TT01) (Photorhabdus luminescens subsp. laumondii).